The following is a 343-amino-acid chain: UPF0283 membrane protein blr7254 (343 aa).

3 helical membrane-spanning segments follow: residues 64–84 (GALF…LGVV), 97–117 (LGFV…VVIG), and 214–234 (IVTA…VAAL).

It belongs to the UPF0283 family.

It is found in the cell inner membrane. The sequence is that of UPF0283 membrane protein blr7254 from Bradyrhizobium diazoefficiens (strain JCM 10833 / BCRC 13528 / IAM 13628 / NBRC 14792 / USDA 110).